The sequence spans 409 residues: Galactosylgalactosylxylosylprotein 3-beta-glucuronosyltransferase S (409 aa).

The interval 1–45 (MSSARLLESQTSDEDNEDIERRPHQSHSRSCSNNTTPTHPPHPMV) is disordered. Topologically, residues 1–53 (MSSARLLESQTSDEDNEDIERRPHQSHSRSCSNNTTPTHPPHPMVRKGGVARR) are cytoplasmic. Ser-9 is modified (phosphoserine). Thr-11 bears the Phosphothreonine mark. A phosphoserine mark is found at Ser-12 and Ser-32. Residues 54–73 (ICLIGGALFLLLVALCYLTL) traverse the membrane as a helical; Signal-anchor for type II membrane protein segment. The Lumenal portion of the chain corresponds to 74 to 409 (SGDTRLGGSE…RENPHSKILS (336 aa)). N-linked (GlcNAc...) asparagine glycans are attached at residues Asn-102 and Asn-223. Asp-235 contributes to the Mn(2+) binding site. Glu-318 acts as the Proton acceptor in catalysis. Asn-338 carries N-linked (GlcNAc...) asparagine glycosylation. The disordered stretch occupies residues 389–409 (EGRNALISKNGRENPHSKILS). Positions 398-409 (NGRENPHSKILS) are enriched in basic and acidic residues.

This sequence belongs to the glycosyltransferase 43 family. Mn(2+) serves as cofactor.

It is found in the golgi apparatus membrane. It carries out the reaction 3-O-(beta-D-galactosyl-(1-&gt;3)-beta-D-galactosyl-(1-&gt;4)-beta-D-xylosyl)-L-seryl-[protein] + UDP-alpha-D-glucuronate = 3-O-(beta-D-GlcA-(1-&gt;3)-beta-D-Gal-(1-&gt;3)-beta-D-Gal-(1-&gt;4)-beta-D-Xyl)-L-seryl-[protein] + UDP + H(+). Its pathway is protein modification; protein glycosylation. Involved in the biosynthesis of L2/HNK-1 carbohydrate epitope on both glycolipids and glycoproteins. Enzyme has a broad specificity. This chain is Galactosylgalactosylxylosylprotein 3-beta-glucuronosyltransferase S (GlcAT-S), found in Drosophila melanogaster (Fruit fly).